A 559-amino-acid polypeptide reads, in one-letter code: Subtelomeric hrmA-associated cluster protein AFUB_079030 (559 aa).

4 disordered regions span residues 163 to 190 (AKHP…TKPE), 298 to 351 (RESN…TGMA), 427 to 451 (SITS…HSAS), and 525 to 559 (FRTG…RPHV). Positions 169–179 (GGKPPAGAPPG) are enriched in low complexity. Composition is skewed to basic and acidic residues over residues 180–189 (KKGDPEKTKP) and 300–325 (SNQK…DNAR). Polar residues predominate over residues 336 to 346 (NSTSPMSNSAE).

In terms of biological role, part of the subtelomeric hrmA-associated cluster (HAC) containing genes that alter the hyphal surface (such as reduced total chitin or increased beta-glucan exposure) and perturb inter-hyphal interactions within the developing biofilms, resulting in a loss of vertically aligned polarized growing filaments. Consequently, this hypoxia-typic morphotype (called H-MORPH) with altered biofilm architecture leads to increased hypoxia fitness, increased host inflammation, rapid disease progression, and mortality in a murine model of invasive aspergillosis. This chain is Subtelomeric hrmA-associated cluster protein AFUB_079030, found in Aspergillus fumigatus (strain CBS 144.89 / FGSC A1163 / CEA10) (Neosartorya fumigata).